Here is a 316-residue protein sequence, read N- to C-terminus: Arabinooligosaccharides transport system permease protein AraP (316 aa).

7 helical membrane passes run 32-52, 94-114, 128-148, 178-198, 224-244, 254-274, and 283-303; these read VVPY…SFYP, TYMI…AVLL, ALFL…RLMF, MFLM…LYFL, FYVT…ISVI, FVFW…GYLY, and MGFG…ISIT. Residues 89–304 form the ABC transmembrane type-1 domain; sequence LQNTTTYMIL…LIIFVISITQ (216 aa).

This sequence belongs to the binding-protein-dependent transport system permease family. MalFG subfamily. The complex is composed of two ATP-binding proteins (MsmX), two transmembrane proteins (AraP and AraQ) and a solute-binding protein (AraN).

Its subcellular location is the cell membrane. Functionally, part of the ABC transporter complex AraNPQ involved in the uptake of arabinooligosaccharides. Responsible for the translocation of the substrate across the membrane. The sequence is that of Arabinooligosaccharides transport system permease protein AraP (araP) from Halalkalibacterium halodurans (strain ATCC BAA-125 / DSM 18197 / FERM 7344 / JCM 9153 / C-125) (Bacillus halodurans).